Consider the following 431-residue polypeptide: Enolase (431 aa).

Position 167 (glutamine 167) interacts with (2R)-2-phosphoglycerate. Glutamate 209 acts as the Proton donor in catalysis. The Mg(2+) site is built by aspartate 246, glutamate 287, and aspartate 314. The (2R)-2-phosphoglycerate site is built by lysine 339, arginine 368, serine 369, and lysine 390. Lysine 339 (proton acceptor) is an active-site residue.

The protein belongs to the enolase family. The cofactor is Mg(2+).

Its subcellular location is the cytoplasm. It is found in the secreted. The protein localises to the cell surface. It catalyses the reaction (2R)-2-phosphoglycerate = phosphoenolpyruvate + H2O. Its pathway is carbohydrate degradation; glycolysis; pyruvate from D-glyceraldehyde 3-phosphate: step 4/5. Functionally, catalyzes the reversible conversion of 2-phosphoglycerate (2-PG) into phosphoenolpyruvate (PEP). It is essential for the degradation of carbohydrates via glycolysis. This chain is Enolase, found in Prochlorococcus marinus (strain MIT 9303).